Here is a 210-residue protein sequence, read N- to C-terminus: Ribonuclease HII (210 aa).

Residues 16-207 (AIVVGVDEVG…VKKCIISTKN (192 aa)) enclose the RNase H type-2 domain. Positions 22, 23, and 116 each coordinate a divalent metal cation.

This sequence belongs to the RNase HII family. Mn(2+) is required as a cofactor. The cofactor is Mg(2+).

It is found in the cytoplasm. The catalysed reaction is Endonucleolytic cleavage to 5'-phosphomonoester.. Endonuclease that specifically degrades the RNA of RNA-DNA hybrids. The sequence is that of Ribonuclease HII from Anaplasma phagocytophilum (strain HZ).